A 608-amino-acid polypeptide reads, in one-letter code: Aspartate--tRNA(Asp/Asn) ligase (608 aa).

Residue Glu-187 coordinates L-aspartate. The aspartate stretch occupies residues 211-214; sequence QQFK. L-aspartate contacts are provided by Arg-233 and His-461. 233-235 provides a ligand contact to ATP; it reads RDE. An ATP-binding site is contributed by Glu-495. Arg-502 is an L-aspartate binding site. Residue 547–550 coordinates ATP; the sequence is GLDR.

Belongs to the class-II aminoacyl-tRNA synthetase family. Type 1 subfamily. Homodimer.

The protein resides in the cytoplasm. It catalyses the reaction tRNA(Asx) + L-aspartate + ATP = L-aspartyl-tRNA(Asx) + AMP + diphosphate. Aspartyl-tRNA synthetase with relaxed tRNA specificity since it is able to aspartylate not only its cognate tRNA(Asp) but also tRNA(Asn). Reaction proceeds in two steps: L-aspartate is first activated by ATP to form Asp-AMP and then transferred to the acceptor end of tRNA(Asp/Asn). The protein is Aspartate--tRNA(Asp/Asn) ligase of Chlorobium phaeobacteroides (strain BS1).